A 303-amino-acid chain; its full sequence is Beta-lactamase L2 (303 aa).

A signal peptide (tat-type signal) is located at residues 1–35 (MLARRRFLQFSGAAVASSLALPLLARAAGKTAASA). Ser83 (acyl-ester intermediate) is an active-site residue. 247–249 (KTG) is a substrate binding site.

The protein belongs to the class-A beta-lactamase family. Predicted to be exported by the Tat system. The position of the signal peptide cleavage has not been experimentally proven.

It catalyses the reaction a beta-lactam + H2O = a substituted beta-amino acid. The sequence is that of Beta-lactamase L2 from Stenotrophomonas maltophilia (Pseudomonas maltophilia).